We begin with the raw amino-acid sequence, 243 residues long: Uridylate kinase (243 aa).

Residue 12–15 (KLSG) coordinates ATP. The interval 20-25 (GAKGFG) is involved in allosteric activation by GTP. Residues glycine 55 and arginine 59 each coordinate ATP. UMP contacts are provided by residues aspartate 74 and 135 to 142 (TGNPYFTT). 3 residues coordinate ATP: glutamine 163, tyrosine 169, and aspartate 172.

The protein belongs to the UMP kinase family. Homohexamer.

The protein resides in the cytoplasm. The catalysed reaction is UMP + ATP = UDP + ADP. It functions in the pathway pyrimidine metabolism; CTP biosynthesis via de novo pathway; UDP from UMP (UMPK route): step 1/1. Its activity is regulated as follows. Allosterically activated by GTP. Inhibited by UTP. Functionally, catalyzes the reversible phosphorylation of UMP to UDP. In Symbiobacterium thermophilum (strain DSM 24528 / JCM 14929 / IAM 14863 / T), this protein is Uridylate kinase.